The following is a 434-amino-acid chain: 3-phosphoshikimate 1-carboxyvinyltransferase (434 aa).

Residues K22, S23, and R27 each coordinate 3-phosphoshikimate. Position 22 (K22) interacts with phosphoenolpyruvate. Phosphoenolpyruvate-binding residues include G93 and R121. 3-phosphoshikimate-binding residues include S168, S169, Q170, S199, D320, and K347. Phosphoenolpyruvate is bound at residue Q170. D320 serves as the catalytic Proton acceptor. Residues R351, R394, and K419 each coordinate phosphoenolpyruvate.

It belongs to the EPSP synthase family. Monomer.

Its subcellular location is the cytoplasm. It carries out the reaction 3-phosphoshikimate + phosphoenolpyruvate = 5-O-(1-carboxyvinyl)-3-phosphoshikimate + phosphate. It functions in the pathway metabolic intermediate biosynthesis; chorismate biosynthesis; chorismate from D-erythrose 4-phosphate and phosphoenolpyruvate: step 6/7. Its function is as follows. Catalyzes the transfer of the enolpyruvyl moiety of phosphoenolpyruvate (PEP) to the 5-hydroxyl of shikimate-3-phosphate (S3P) to produce enolpyruvyl shikimate-3-phosphate and inorganic phosphate. The sequence is that of 3-phosphoshikimate 1-carboxyvinyltransferase from Paraburkholderia phytofirmans (strain DSM 17436 / LMG 22146 / PsJN) (Burkholderia phytofirmans).